The primary structure comprises 62 residues: Venom protein 51.1 (62 aa).

The first 25 residues, 1 to 25 (MKFFGILLIVTMVVLVMIATTYVES), serve as a signal peptide directing secretion. 3 cysteine pairs are disulfide-bonded: C32–C53, C39–C58, and C43–C60.

As to expression, expressed by the venom gland.

It is found in the secreted. In terms of biological role, neurotoxin. Decreases the action potential of myelinated nerves in mice and frogs. This is Venom protein 51.1 from Lychas mucronatus (Chinese swimming scorpion).